Here is a 181-residue protein sequence, read N- to C-terminus: ATP-dependent protease subunit HslV (181 aa).

The active site involves Thr7. Residues Gly166, Cys169, and Thr172 each contribute to the Na(+) site.

This sequence belongs to the peptidase T1B family. HslV subfamily. As to quaternary structure, a double ring-shaped homohexamer of HslV is capped on each side by a ring-shaped HslU homohexamer. The assembly of the HslU/HslV complex is dependent on binding of ATP.

The protein localises to the cytoplasm. It carries out the reaction ATP-dependent cleavage of peptide bonds with broad specificity.. Its activity is regulated as follows. Allosterically activated by HslU binding. Functionally, protease subunit of a proteasome-like degradation complex believed to be a general protein degrading machinery. This is ATP-dependent protease subunit HslV from Variovorax paradoxus (strain S110).